The following is a 71-amino-acid chain: Disintegrin simusmin (71 aa).

A Disintegrin domain is found at 1–71; the sequence is AGEECDCGSP…SADCPRNPFH (71 aa). Intrachain disulfides connect cysteine 5–cysteine 20, cysteine 7–cysteine 15, cysteine 14–cysteine 37, cysteine 28–cysteine 34, cysteine 33–cysteine 58, and cysteine 46–cysteine 65. The Cell attachment site signature appears at 50–52; the sequence is RGD.

Belongs to the venom metalloproteinase (M12B) family. P-II subfamily. P-IIa sub-subfamily. In terms of assembly, monomer. As to expression, expressed by the venom gland.

It is found in the secreted. Its function is as follows. Inhibits ADP- (IC(50)=56 nM) and collagen-induced (IC(50)=49 nM) aggregation of human platelets. In vitro, inhibits adhesion of endothelial cells to vitronectin, type-I collagen and, to a lower degree, fibronectin and laminin. In Crotalus simus (Central American rattlesnake), this protein is Disintegrin simusmin.